The following is a 131-amino-acid chain: Squamosa promoter-binding protein 1 (131 aa).

The span at 1–10 (MDTSKGEGKR) shows a compositional bias: basic and acidic residues. The tract at residues 1–52 (MDTSKGEGKRVIKLPGSQEQGEEEDDIGEDSKKTRALTPSGKRASGSTQRSC) is disordered. The SBP-type zinc finger occupies 49-126 (QRSCQVENCA…AGHNERRRKS (78 aa)). Cysteine 52, cysteine 57, cysteine 74, histidine 77, cysteine 93, cysteine 96, histidine 100, and cysteine 112 together coordinate Zn(2+). The short motif at 109-125 (KRSCRRRLAGHNERRRK) is the Bipartite nuclear localization signal element.

The protein localises to the nucleus. Probable transcriptional factor. Binds to the promoter of the SQUAMOSA gene. The protein is Squamosa promoter-binding protein 1 (SBP1) of Antirrhinum majus (Garden snapdragon).